Here is a 111-residue protein sequence, read N- to C-terminus: uncharacterized protein (111 aa).

The N-myristoyl glycine; by host moiety is linked to residue G2.

This is an uncharacterized protein from Acanthamoeba polyphaga mimivirus (APMV).